Consider the following 708-residue polypeptide: Serine/threonine-protein kinase Nek5 (708 aa).

A Protein kinase domain is found at 4–259 (YDVIKAIGQG…INSILKRPFL (256 aa)). Residues 10 to 18 (IGQGAFGKA) and lysine 33 contribute to the ATP site. Aspartate 128 acts as the Proton acceptor in catalysis. 2 disordered regions span residues 376-403 (SYHP…PSQW) and 423-454 (KQLG…FQEL). Over residues 440 to 454 (QELRSNGEEPRFQEL) the composition is skewed to basic and acidic residues.

It belongs to the protein kinase superfamily. NEK Ser/Thr protein kinase family. NIMA subfamily. Requires Mg(2+) as cofactor.

The protein resides in the cell projection. It localises to the cilium. Its subcellular location is the flagellum. The catalysed reaction is L-seryl-[protein] + ATP = O-phospho-L-seryl-[protein] + ADP + H(+). It carries out the reaction L-threonyl-[protein] + ATP = O-phospho-L-threonyl-[protein] + ADP + H(+). The sequence is that of Serine/threonine-protein kinase Nek5 (NEK5) from Homo sapiens (Human).